The sequence spans 190 residues: Peptidyl-tRNA hydrolase (190 aa).

Residue Y14 coordinates tRNA. H19 serves as the catalytic Proton acceptor. Residues Y64, N66, and N112 each contribute to the tRNA site.

The protein belongs to the PTH family. As to quaternary structure, monomer.

The protein resides in the cytoplasm. The enzyme catalyses an N-acyl-L-alpha-aminoacyl-tRNA + H2O = an N-acyl-L-amino acid + a tRNA + H(+). Hydrolyzes ribosome-free peptidyl-tRNAs (with 1 or more amino acids incorporated), which drop off the ribosome during protein synthesis, or as a result of ribosome stalling. In terms of biological role, catalyzes the release of premature peptidyl moieties from peptidyl-tRNA molecules trapped in stalled 50S ribosomal subunits, and thus maintains levels of free tRNAs and 50S ribosomes. This Chlorobium luteolum (strain DSM 273 / BCRC 81028 / 2530) (Pelodictyon luteolum) protein is Peptidyl-tRNA hydrolase.